A 278-amino-acid polypeptide reads, in one-letter code: NAD kinase (278 aa).

D67 (proton acceptor) is an active-site residue. Residues 67–68 (DG), R72, 137–138 (NE), K148, R165, D167, 178–183 (TGYAMS), A202, and Q237 contribute to the NAD(+) site.

The protein belongs to the NAD kinase family. It depends on a divalent metal cation as a cofactor.

It is found in the cytoplasm. It catalyses the reaction NAD(+) + ATP = ADP + NADP(+) + H(+). Functionally, involved in the regulation of the intracellular balance of NAD and NADP, and is a key enzyme in the biosynthesis of NADP. Catalyzes specifically the phosphorylation on 2'-hydroxyl of the adenosine moiety of NAD to yield NADP. This chain is NAD kinase, found in Thermococcus kodakarensis (strain ATCC BAA-918 / JCM 12380 / KOD1) (Pyrococcus kodakaraensis (strain KOD1)).